The following is a 340-amino-acid chain: Polyporopepsin (340 aa).

In terms of domain architecture, Peptidase A1 spans 14–330 (YVVNVGVGSP…DTTNKRLGLA (317 aa)). The active site involves Asp-32. Asn-192 carries an N-linked (GlcNAc...) asparagine glycan. Residue Asp-212 is part of the active site. N-linked (GlcNAc...) asparagine glycosylation is present at Asn-238.

This sequence belongs to the peptidase A1 family.

The catalysed reaction is Milk clotting activity, broad specificity, but fails to cleave 15-Leu-|-Tyr-16 or 16-Tyr-|-Leu-17 of insulin B chain.. This chain is Polyporopepsin, found in Irpex lacteus (Milk-white toothed polypore).